The following is a 601-amino-acid chain: Glutamyl-tRNA(Gln) amidotransferase subunit B, mitochondrial (601 aa).

Residues 1-52 (MLQQWLRQSPGAARFLRGSCCRGPQSGSLRHSPLPTAPHRCIRSLQTSATES) constitute a mitochondrion transit peptide.

The protein belongs to the GatB/GatE family. GatB subfamily. In terms of assembly, subunit of the heterotrimeric GatCAB amidotransferase (AdT) complex, composed of A, B and C subunits.

The protein resides in the mitochondrion. The enzyme catalyses L-glutamyl-tRNA(Gln) + L-glutamine + ATP + H2O = L-glutaminyl-tRNA(Gln) + L-glutamate + ADP + phosphate + H(+). Allows the formation of correctly charged Gln-tRNA(Gln) through the transamidation of misacylated Glu-tRNA(Gln) in the mitochondria. The reaction takes place in the presence of glutamine and ATP through an activated gamma-phospho-Glu-tRNA(Gln). This is Glutamyl-tRNA(Gln) amidotransferase subunit B, mitochondrial from Neosartorya fischeri (strain ATCC 1020 / DSM 3700 / CBS 544.65 / FGSC A1164 / JCM 1740 / NRRL 181 / WB 181) (Aspergillus fischerianus).